We begin with the raw amino-acid sequence, 134 residues long: Small ribosomal subunit protein uS11 (134 aa).

It belongs to the universal ribosomal protein uS11 family. Part of the 30S ribosomal subunit. Interacts with proteins S7 and S18. Binds to IF-3.

Functionally, located on the platform of the 30S subunit, it bridges several disparate RNA helices of the 16S rRNA. Forms part of the Shine-Dalgarno cleft in the 70S ribosome. The chain is Small ribosomal subunit protein uS11 from Polaromonas sp. (strain JS666 / ATCC BAA-500).